The following is a 354-amino-acid chain: MNEAIIQLDHIDITFRQKKRVIEAVKDVTVHINQGDIYGIVGYSGAGKSTLVRVINLLQAPTNGKITVDGDVTFDQGKIQLSADALRQKRRDIGMIFQHFNLMAQKTAKENVAFALRHSSLSKTEKEHKVIELLELVGLSERADNYPAQLSGGQKQRVAIARALANDPKILISDEATSALDPKTTKQILALLQELNRKLGLTIVMITHEMQIVKDICNRVAVMQNGVLIEEGSVLDIFSNPKEALTQEFITTATGIDEALEKINQQDIVKHLPANALLAQLKYAGTSTDEPLLNSIYRQFEVTANILYGNIEILDHIPVGDMIVVLEGQAENILAAEKALHEAGVDVSILKRGA.

One can recognise an ABC transporter domain in the interval 8 to 250 (LDHIDITFRQ…PKEALTQEFI (243 aa)). 42-49 (GYSGAGKS) serves as a coordination point for ATP.

Belongs to the ABC transporter superfamily. Methionine importer (TC 3.A.1.24) family. In terms of assembly, the complex is composed of two ATP-binding proteins (MetN), two transmembrane proteins (MetI) and a solute-binding protein (MetQ).

The protein resides in the cell membrane. It catalyses the reaction L-methionine(out) + ATP + H2O = L-methionine(in) + ADP + phosphate + H(+). The enzyme catalyses D-methionine(out) + ATP + H2O = D-methionine(in) + ADP + phosphate + H(+). Part of the ABC transporter complex MetNIQ involved in methionine import. Responsible for energy coupling to the transport system. The sequence is that of Methionine import ATP-binding protein MetN from Streptococcus pyogenes serotype M1.